The chain runs to 374 residues: S-adenosylmethionine:tRNA ribosyltransferase-isomerase (374 aa).

It belongs to the QueA family. Monomer.

The protein resides in the cytoplasm. The enzyme catalyses 7-aminomethyl-7-carbaguanosine(34) in tRNA + S-adenosyl-L-methionine = epoxyqueuosine(34) in tRNA + adenine + L-methionine + 2 H(+). It participates in tRNA modification; tRNA-queuosine biosynthesis. Transfers and isomerizes the ribose moiety from AdoMet to the 7-aminomethyl group of 7-deazaguanine (preQ1-tRNA) to give epoxyqueuosine (oQ-tRNA). This Prochlorococcus marinus (strain AS9601) protein is S-adenosylmethionine:tRNA ribosyltransferase-isomerase.